The following is a 153-amino-acid chain: Aspartate carbamoyltransferase regulatory chain (153 aa).

Positions 109, 114, 135, and 138 each coordinate Zn(2+).

It belongs to the PyrI family. Contains catalytic and regulatory chains. The cofactor is Zn(2+).

Involved in allosteric regulation of aspartate carbamoyltransferase. The polypeptide is Aspartate carbamoyltransferase regulatory chain (Natronomonas pharaonis (strain ATCC 35678 / DSM 2160 / CIP 103997 / JCM 8858 / NBRC 14720 / NCIMB 2260 / Gabara) (Halobacterium pharaonis)).